A 267-amino-acid polypeptide reads, in one-letter code: 4-hydroxy-tetrahydrodipicolinate reductase (267 aa).

NAD(+)-binding positions include 8 to 13 (GAAGRM) and glutamate 34. Arginine 35 is an NADP(+) binding site. Residues 98–100 (GST) and 122–125 (APNM) contribute to the NAD(+) site. Catalysis depends on histidine 155, which acts as the Proton donor/acceptor. Histidine 156 is a (S)-2,3,4,5-tetrahydrodipicolinate binding site. The Proton donor role is filled by lysine 159. 165 to 166 (GT) is a binding site for (S)-2,3,4,5-tetrahydrodipicolinate.

It belongs to the DapB family.

Its subcellular location is the cytoplasm. It carries out the reaction (S)-2,3,4,5-tetrahydrodipicolinate + NAD(+) + H2O = (2S,4S)-4-hydroxy-2,3,4,5-tetrahydrodipicolinate + NADH + H(+). It catalyses the reaction (S)-2,3,4,5-tetrahydrodipicolinate + NADP(+) + H2O = (2S,4S)-4-hydroxy-2,3,4,5-tetrahydrodipicolinate + NADPH + H(+). Its pathway is amino-acid biosynthesis; L-lysine biosynthesis via DAP pathway; (S)-tetrahydrodipicolinate from L-aspartate: step 4/4. Functionally, catalyzes the conversion of 4-hydroxy-tetrahydrodipicolinate (HTPA) to tetrahydrodipicolinate. The protein is 4-hydroxy-tetrahydrodipicolinate reductase of Geotalea daltonii (strain DSM 22248 / JCM 15807 / FRC-32) (Geobacter daltonii).